Consider the following 142-residue polypeptide: MAPSTKATAAKKAVVKGTNGKKALKVRTSASFRLPKTLKLARSPKYATKAVPHYNRLDSYKVIEQPITSETAMKKVEDGNTLVFKVSLKANKYQIKKAVKELYEVDVLSVNTLVRPNGTKKAYVRLTADFDALDIANRIGYI.

This sequence belongs to the universal ribosomal protein uL23 family.

The chain is Large ribosomal subunit protein uL23 (RPL25) from Kluyveromyces lactis (strain ATCC 8585 / CBS 2359 / DSM 70799 / NBRC 1267 / NRRL Y-1140 / WM37) (Yeast).